Here is a 355-residue protein sequence, read N- to C-terminus: MKLVDEAEILVTAGNGGNGCVGFRREKFIPLGGPDGGDGGAGGSVWIVADENVNTLVDFRHERTFKAQRGENGMGRQAYGKGGEDRIIVVPVGTVVINVQTDEVIGDLTQHGDRLLVAKGGKGGLGNMHFKSSVNRAPRQATTGEEGEERLLKLELKLLADVGLLGFPNAGKSTLIRAVSAATPKVADYPFTTLYPNLGVVSVEAYRSFVIADVPGLIEGAADGAGLGTQFLRHLQRTRLLLHLVDISPALGVYGEGGVDGVSPADQVRTIERELERHDPELLKKPRWLVLNKADLMFEDEARAAAETIVAELGWTAPWYLVSALGRDGTFPIMKDVMAFFDRQREDELEARNAG.

The 159-residue stretch at 1–159 folds into the Obg domain; the sequence is MKLVDEAEIL…RLLKLELKLL (159 aa). The region spanning 160–342 is the OBG-type G domain; that stretch reads ADVGLLGFPN…IMKDVMAFFD (183 aa). GTP-binding positions include 166–173, 191–195, 213–216, 292–295, and 323–325; these read GFPNAGKS, FTTLY, DVPG, NKAD, and SAL. Mg(2+) contacts are provided by serine 173 and threonine 193.

Belongs to the TRAFAC class OBG-HflX-like GTPase superfamily. OBG GTPase family. As to quaternary structure, monomer. Mg(2+) is required as a cofactor.

The protein localises to the cytoplasm. Its function is as follows. An essential GTPase which binds GTP, GDP and possibly (p)ppGpp with moderate affinity, with high nucleotide exchange rates and a fairly low GTP hydrolysis rate. Plays a role in control of the cell cycle, stress response, ribosome biogenesis and in those bacteria that undergo differentiation, in morphogenesis control. The polypeptide is GTPase Obg (Xanthomonas axonopodis pv. citri (strain 306)).